The sequence spans 545 residues: Chaperonin GroEL (545 aa).

ATP-binding positions include Thr30–Pro33, Lys51, Asp87–Thr91, Gly413, Asn477–Ala479, and Asp493.

Belongs to the chaperonin (HSP60) family. In terms of assembly, forms a cylinder of 14 subunits composed of two heptameric rings stacked back-to-back. Interacts with the co-chaperonin GroES.

The protein resides in the cytoplasm. The enzyme catalyses ATP + H2O + a folded polypeptide = ADP + phosphate + an unfolded polypeptide.. In terms of biological role, together with its co-chaperonin GroES, plays an essential role in assisting protein folding. The GroEL-GroES system forms a nano-cage that allows encapsulation of the non-native substrate proteins and provides a physical environment optimized to promote and accelerate protein folding. The polypeptide is Chaperonin GroEL (Pseudomonas putida (Arthrobacter siderocapsulatus)).